Here is a 63-residue protein sequence, read N- to C-terminus: Cytochrome c oxidase subunit 7C, mitochondrial (63 aa).

A mitochondrion-targeting transit peptide spans 1 to 16 (MLGQSIRRFTTSVVRR). The Mitochondrial matrix segment spans residues 17-33 (SHYEEGPGKNLPFSVEN). Lys25 is modified (N6-acetyllysine; alternate). The residue at position 25 (Lys25) is an N6-succinyllysine; alternate. A helical membrane pass occupies residues 34–60 (KWSLLAKMCLYFGSAFATPFLVVRHQL). Topologically, residues 61-63 (LKT) are mitochondrial intermembrane.

Belongs to the cytochrome c oxidase VIIc family. As to quaternary structure, component of the cytochrome c oxidase (complex IV, CIV), a multisubunit enzyme composed of 14 subunits. The complex is composed of a catalytic core of 3 subunits MT-CO1, MT-CO2 and MT-CO3, encoded in the mitochondrial DNA, and 11 supernumerary subunits COX4I1 (or COX4I2), COX5A, COX5B, COX6A1 (or COX6A2), COX6B1 (or COX6B2), COX6C, COX7A2 (or COX7A1), COX7B, COX7C, COX8A and NDUFA4, which are encoded in the nuclear genome. The complex exists as a monomer or a dimer and forms supercomplexes (SCs) in the inner mitochondrial membrane with NADH-ubiquinone oxidoreductase (complex I, CI) and ubiquinol-cytochrome c oxidoreductase (cytochrome b-c1 complex, complex III, CIII), resulting in different assemblies (supercomplex SCI(1)III(2)IV(1) and megacomplex MCI(2)III(2)IV(2)). Interacts with RAB5IF.

The protein resides in the mitochondrion inner membrane. It functions in the pathway energy metabolism; oxidative phosphorylation. Component of the cytochrome c oxidase, the last enzyme in the mitochondrial electron transport chain which drives oxidative phosphorylation. The respiratory chain contains 3 multisubunit complexes succinate dehydrogenase (complex II, CII), ubiquinol-cytochrome c oxidoreductase (cytochrome b-c1 complex, complex III, CIII) and cytochrome c oxidase (complex IV, CIV), that cooperate to transfer electrons derived from NADH and succinate to molecular oxygen, creating an electrochemical gradient over the inner membrane that drives transmembrane transport and the ATP synthase. Cytochrome c oxidase is the component of the respiratory chain that catalyzes the reduction of oxygen to water. Electrons originating from reduced cytochrome c in the intermembrane space (IMS) are transferred via the dinuclear copper A center (CU(A)) of subunit 2 and heme A of subunit 1 to the active site in subunit 1, a binuclear center (BNC) formed by heme A3 and copper B (CU(B)). The BNC reduces molecular oxygen to 2 water molecules using 4 electrons from cytochrome c in the IMS and 4 protons from the mitochondrial matrix. This is Cytochrome c oxidase subunit 7C, mitochondrial (COX7C) from Homo sapiens (Human).